A 282-amino-acid polypeptide reads, in one-letter code: Protein FRG2-like-2 (282 aa).

Over residues 1-10 (MGKGNEDPDL) the composition is skewed to basic and acidic residues. 2 disordered regions span residues 1–96 (MGKG…QENC) and 249–282 (GPGDSALDREAHPFPGQEITEPVSGSDEAKLGAP). Composition is skewed to polar residues over residues 13-31 (SSIQCSTDQPPFQQISFTE), 58-68 (RQAGSDPNPNK), and 79-94 (GNSTAGSEPESSSYQE).

The protein belongs to the FRG2 family.

The protein resides in the nucleus. This chain is Protein FRG2-like-2 (FRG2C), found in Homo sapiens (Human).